A 531-amino-acid chain; its full sequence is Protein MGF 505-1R (531 aa).

The protein belongs to the asfivirus MGF 505 family.

In terms of biological role, plays a role in virus cell tropism, and may be required for efficient virus replication in macrophages. This is Protein MGF 505-1R from Ornithodoros (relapsing fever ticks).